A 670-amino-acid polypeptide reads, in one-letter code: MHAIQTEMDQLTHTINQHNIRYYVDDAPSIPDAEYDRLIKRLTELEGDYPQFKSVDSPTQRVGGIALQKFAQITHLKPMLSLDNAFEQADFAAFNKRITDKVDNVDYVCEPKLDGLAVSITYRFGVLERAATRGDGSVGEDITANVRTIRSIPLKLRGEGFPDLVEVRGEVFMPKAAFEVLNQRQISKGDKVFVNPRNAAAGSLRQLDSKITASRALGFYAYALGVVEGESQPMQTSHYGQLTQLQQWGVPVSSEVKVTDSLEKVYAYYADIMARRSALEYEIDGVVIKVNDIAKQQTLGFVAKAPRWAIAYKFPAQEEMTLLESVDFQVGRTGAVTPVARLKPIFVGGVTVSNATLHNADEIARLGVKIGDTVIIRRAGDVIPQIVAIVPEKRPDDAQDIIFPQHCPVCQSIVERLEGEAVARCSGGLFCEAQRKEAIKHFASRKALNIDGMGDKIVEQLIDKELVKTPADLFSLTASSVTMLDRMAMKSATNIVAAIKQAKTTTLARFLYSLGIREVGEATAANLAQHFTEFERIRTASVEQLLEVADVGDIVAKHIRQFFSQPHNIEVIDQLLEAGITWPVIEQADESQLSLKGQTWVLTGTLTQLNRNDAKAQLQALGAKVAGSVSKNTDCLVAGEAAGSKLAKAEELGVKVIDEQALMDLLNAAN.

NAD(+) is bound by residues 32 to 36, 81 to 82, and Glu110; these read DAEYD and SL. Catalysis depends on Lys112, which acts as the N6-AMP-lysine intermediate. NAD(+) is bound by residues Arg133, Glu170, Lys289, and Lys313. Zn(2+)-binding residues include Cys407, Cys410, Cys425, and Cys431. The 81-residue stretch at 590-670 folds into the BRCT domain; sequence ESQLSLKGQT…ALMDLLNAAN (81 aa).

It belongs to the NAD-dependent DNA ligase family. LigA subfamily. Mg(2+) serves as cofactor. Mn(2+) is required as a cofactor.

The enzyme catalyses NAD(+) + (deoxyribonucleotide)n-3'-hydroxyl + 5'-phospho-(deoxyribonucleotide)m = (deoxyribonucleotide)n+m + AMP + beta-nicotinamide D-nucleotide.. Its function is as follows. DNA ligase that catalyzes the formation of phosphodiester linkages between 5'-phosphoryl and 3'-hydroxyl groups in double-stranded DNA using NAD as a coenzyme and as the energy source for the reaction. It is essential for DNA replication and repair of damaged DNA. The polypeptide is DNA ligase (Shewanella frigidimarina (strain NCIMB 400)).